A 481-amino-acid polypeptide reads, in one-letter code: U6 small nuclear RNA (adenine-(43)-N(6))-methyltransferase (481 aa).

5 residues coordinate S-adenosyl-L-methionine: Lys82, Gly108, Asp131, Thr164, and Asn184.

The protein belongs to the methyltransferase superfamily. METTL16/RlmF family. Self-associates. Interacts with dlc-1; the interaction is direct, and is required for nuclear localization of mett-10.

The protein localises to the nucleus. It carries out the reaction an adenosine in mRNA + S-adenosyl-L-methionine = an N(6)-methyladenosine in mRNA + S-adenosyl-L-homocysteine + H(+). It catalyses the reaction adenosine in U6 snRNA + S-adenosyl-L-methionine = N(6)-methyladenosine in U6 snRNA + S-adenosyl-L-homocysteine + H(+). Its function is as follows. RNA N6-methyltransferase that methylates adenosine residues at the N(6) position of a subset of RNAs and is involved in S-adenosyl-L-methionine homeostasis by regulating splicing of S-adenosylmethionine synthase transcripts (sams-3, sams-4 and sams-5). Able to N6-methylate a subset of mRNAs containing the 5'UACAGAAAC-3' nonamer sequence. Plays a key role in S-adenosyl-L-methionine homeostasis: under rich-diet conditions, catalyzes N6-methylation of S-adenosylmethionine synthase mRNAs (sams-3, sams-4 and sams-5), directly inhibiting splicing and protein production of S-adenosylmethionine synthase. In addition to mRNAs, also able to mediate N6-methylation of U6 small nuclear RNA (U6 snRNA). Required for gamete production, inhibiting germ cell proliferative fate and ensuring germ cell meiotic development. Also promotes progression of the mitotic cell cycle in those germ cells that continue to proliferate. Plays a role in the development of the vulva, somatic gonad and embryo. The protein is U6 small nuclear RNA (adenine-(43)-N(6))-methyltransferase of Caenorhabditis briggsae.